A 365-amino-acid polypeptide reads, in one-letter code: Glycolaldehyde reductase (365 aa).

Positions 37, 94, 95, 116, 119, 125, 127, and 131 each coordinate NAD(+). Residues Asp-171, His-254, and His-271 each contribute to the Zn(2+) site.

This sequence belongs to the iron-containing alcohol dehydrogenase family. Requires Zn(2+) as cofactor.

It carries out the reaction ethylene glycol + NAD(+) = glycolaldehyde + NADH + H(+). Its activity is regulated as follows. Is subject to substrate inhibition. Its function is as follows. Oxidoreductase involved in the non-carboxylating pentose bisphosphate pathway, a nucleoside degradation pathway present in some halophilic archaea. Catalyzes the reduction of glycolaldehyde to ethylene glycol. Cannot catalyze the oxidation of glycerol 1-phosphate nor the reduction of dihydroxyacetone phosphate (DHAP). The protein is Glycolaldehyde reductase of Halobacterium salinarum (strain ATCC 700922 / JCM 11081 / NRC-1) (Halobacterium halobium).